Reading from the N-terminus, the 89-residue chain is Phosphocarrier protein HPr (89 aa).

Residues 1–88 (MLQRDTTIIN…ALIANRFGEG (88 aa)) enclose the HPr domain. H15 functions as the Pros-phosphohistidine intermediate in the catalytic mechanism.

It belongs to the HPr family.

The protein localises to the cytoplasm. General (non sugar-specific) component of the phosphoenolpyruvate-dependent sugar phosphotransferase system (sugar PTS). This major carbohydrate active-transport system catalyzes the phosphorylation of incoming sugar substrates concomitantly with their translocation across the cell membrane. The phosphoryl group from phosphoenolpyruvate (PEP) is transferred to the phosphoryl carrier protein HPr by enzyme I. Phospho-HPr then transfers it to the PTS EIIA domain. The protein is Phosphocarrier protein HPr (phbH) of Cupriavidus necator (strain ATCC 17699 / DSM 428 / KCTC 22496 / NCIMB 10442 / H16 / Stanier 337) (Ralstonia eutropha).